The sequence spans 82 residues: Progonadoliberin-3 (82 aa).

An N-terminal signal peptide occupies residues 1-23 (MDLSSKTVVQVVMLALIAQVTFS). Gln24 is modified (pyrrolidone carboxylic acid). At Gly33 the chain carries Glycine amide.

Belongs to the GnRH family.

It localises to the secreted. In terms of biological role, stimulates the secretion of gonadotropins. In Oncorhynchus masou (Cherry salmon), this protein is Progonadoliberin-3 (gnrh3).